Here is a 260-residue protein sequence, read N- to C-terminus: 3'-5' ssDNA/RNA exonuclease TatD (260 aa).

A divalent metal cation is bound by residues Glu92, His128, and His153.

Belongs to the metallo-dependent hydrolases superfamily. TatD-type hydrolase family. TatD subfamily. In terms of assembly, monomer. Requires Mg(2+) as cofactor.

The protein localises to the cytoplasm. 3'-5' exonuclease that prefers single-stranded DNA and RNA. May play a role in the H(2)O(2)-induced DNA damage repair. The chain is 3'-5' ssDNA/RNA exonuclease TatD from Pantoea ananatis (strain LMG 20103).